The following is a 261-amino-acid chain: Thiamine thiazole synthase (261 aa).

Residues Ser-40, 59-60, Gly-67, Val-133, and 159-161 contribute to the NAD(+) site; these read ER and HID. Fe cation-binding residues include Asp-161 and His-176. 2 residues coordinate NAD(+): Ser-179 and Met-226. Arg-236 is a glycine binding site.

Belongs to the THI4 family. Homooctamer; tetramer of dimers. Requires Fe(2+) as cofactor.

It catalyses the reaction hydrogen sulfide + glycine + NAD(+) = ADP-5-ethyl-4-methylthiazole-2-carboxylate + nicotinamide + 3 H2O + H(+). Its pathway is cofactor biosynthesis; thiamine diphosphate biosynthesis. Its function is as follows. Involved in the biosynthesis of the thiazole moiety of thiamine. Catalyzes the conversion of NAD and glycine to adenosine diphosphate 5-(2-hydroxyethyl)-4-methylthiazole-2-carboxylate (ADT), an adenylated thiazole intermediate, using free sulfide as a source of sulfur. The polypeptide is Thiamine thiazole synthase (Methanococcus maripaludis (strain C5 / ATCC BAA-1333)).